The primary structure comprises 119 residues: MTKSELIAALAARYPQLAARDTDYAVKTMLDAMTQALASGQRIEIRGFGSFSLSQRSPRIGRNPKSGEQVLVPGKQVPHFKAGKELRERVDLVGNDQGDDSSNGSSDPLQSVMDMHAMH.

A disordered region spans residues 91–119; it reads DLVGNDQGDDSSNGSSDPLQSVMDMHAMH. The segment covering 94–107 has biased composition (low complexity); sequence GNDQGDDSSNGSSD.

The protein belongs to the bacterial histone-like protein family. In terms of assembly, heterodimer of an alpha and a beta chain.

Functionally, this protein is one of the two subunits of integration host factor, a specific DNA-binding protein that functions in genetic recombination as well as in transcriptional and translational control. The protein is Integration host factor subunit beta of Bordetella parapertussis (strain 12822 / ATCC BAA-587 / NCTC 13253).